The following is a 594-amino-acid chain: UvrABC system protein C (594 aa).

The region spanning 14–91 is the GIY-YIG domain; the sequence is DQPGCYLMKD…IKKHDPKYNI (78 aa). The UVR domain maps to 196–231; it reads KEVRSELETKMYEASEKLEFERAKELRDQIAHIDAI.

Belongs to the UvrC family. As to quaternary structure, interacts with UvrB in an incision complex.

The protein resides in the cytoplasm. The UvrABC repair system catalyzes the recognition and processing of DNA lesions. UvrC both incises the 5' and 3' sides of the lesion. The N-terminal half is responsible for the 3' incision and the C-terminal half is responsible for the 5' incision. This is UvrABC system protein C from Bacillus cereus (strain Q1).